A 303-amino-acid chain; its full sequence is Acetylglutamate kinase (303 aa).

Residues 75 to 76 (GG), arginine 97, and asparagine 194 contribute to the substrate site.

Belongs to the acetylglutamate kinase family. ArgB subfamily.

It localises to the cytoplasm. It carries out the reaction N-acetyl-L-glutamate + ATP = N-acetyl-L-glutamyl 5-phosphate + ADP. The protein operates within amino-acid biosynthesis; L-arginine biosynthesis; N(2)-acetyl-L-ornithine from L-glutamate: step 2/4. In terms of biological role, catalyzes the ATP-dependent phosphorylation of N-acetyl-L-glutamate. The polypeptide is Acetylglutamate kinase (Gloeobacter violaceus (strain ATCC 29082 / PCC 7421)).